The following is a 112-amino-acid chain: CRISPR-associated endoribonuclease Cas2 2 (112 aa).

A Mg(2+)-binding site is contributed by aspartate 15.

The protein belongs to the CRISPR-associated endoribonuclease Cas2 protein family. In terms of assembly, homodimer, forms a heterotetramer with a Cas1 homodimer. Requires Mg(2+) as cofactor.

In terms of biological role, CRISPR (clustered regularly interspaced short palindromic repeat), is an adaptive immune system that provides protection against mobile genetic elements (viruses, transposable elements and conjugative plasmids). CRISPR clusters contain sequences complementary to antecedent mobile elements and target invading nucleic acids. CRISPR clusters are transcribed and processed into CRISPR RNA (crRNA). Functions as a ssRNA-specific endoribonuclease. Involved in the integration of spacer DNA into the CRISPR cassette. This is CRISPR-associated endoribonuclease Cas2 2 from Rhodospirillum rubrum (strain ATCC 11170 / ATH 1.1.1 / DSM 467 / LMG 4362 / NCIMB 8255 / S1).